A 421-amino-acid chain; its full sequence is Signal recognition particle receptor FtsY (421 aa).

Over residues 1–10 the composition is skewed to basic residues; that stretch reads MFSFFRRKKK. A disordered region spans residues 1–22; the sequence is MFSFFRRKKKQETPAPEEAQIQ. GTP-binding positions include 228–235, 309–313, and 373–376; these read GINGAGKT, DTAGR, and TKLD.

Belongs to the GTP-binding SRP family. FtsY subfamily. Part of the signal recognition particle protein translocation system, which is composed of SRP and FtsY. SRP is a ribonucleoprotein composed of Ffh and a 4.5S RNA molecule.

Its subcellular location is the cell membrane. The protein localises to the cytoplasm. The enzyme catalyses GTP + H2O = GDP + phosphate + H(+). In terms of biological role, involved in targeting and insertion of nascent membrane proteins into the cytoplasmic membrane. Acts as a receptor for the complex formed by the signal recognition particle (SRP) and the ribosome-nascent chain (RNC). Interaction with SRP-RNC leads to the transfer of the RNC complex to the Sec translocase for insertion into the membrane, the hydrolysis of GTP by both Ffh and FtsY, and the dissociation of the SRP-FtsY complex into the individual components. The polypeptide is Signal recognition particle receptor FtsY (Neisseria meningitidis serogroup C).